Here is a 78-residue protein sequence, read N- to C-terminus: Large ribosomal subunit protein bL28 (78 aa).

It belongs to the bacterial ribosomal protein bL28 family.

The sequence is that of Large ribosomal subunit protein bL28 from Histophilus somni (strain 129Pt) (Haemophilus somnus).